A 417-amino-acid chain; its full sequence is Phosphoglycerate kinase 2 (417 aa).

Residue Ser-4 is modified to Phosphoserine. Lys-11 carries the post-translational modification N6-acetyllysine. 6 residues coordinate (2R)-3-phosphoglycerate: Val-23, Asp-24, Phe-25, Asn-26, Gln-38, and Arg-39. Lys-48 carries the post-translational modification N6-acetyllysine. (2R)-3-phosphoglycerate contacts are provided by Ser-62, His-63, Gly-65, and Arg-66. An N6-acetyllysine mark is found at Lys-75, Lys-86, and Lys-97. (2R)-3-phosphoglycerate-binding residues include Leu-122 and Arg-123. Lys-131 and Lys-146 each carry N6-acetyllysine. (2R)-3-phosphoglycerate is bound by residues His-170 and Arg-171. A Phosphotyrosine modification is found at Tyr-196. An N6-acetyllysine modification is found at Lys-199. Gly-214 contributes to the ADP binding site. Gly-214 lines the CDP pocket. The AMP site is built by Ala-215 and Lys-216. Ala-215 serves as a coordination point for ATP. Residue Ala-215 participates in Mg(2+) binding. A CDP-binding site is contributed by Asp-219. Asp-219 contacts Mg(2+). AMP is bound at residue Lys-220. An ATP-binding site is contributed by Lys-220. Gly-238 serves as a coordination point for ADP. Position 238 (Gly-238) interacts with CDP. Gly-239 provides a ligand contact to AMP. Gly-239 serves as a coordination point for ATP. An N6-acetyllysine mark is found at Lys-267 and Lys-291. Residue Gly-313 coordinates AMP. Gly-313 contributes to the ATP binding site. CDP is bound by residues Gly-338, Ile-340, and Phe-343. An ADP-binding site is contributed by Phe-343. Glu-344 serves as a coordination point for AMP. ATP contacts are provided by Glu-344, Asp-375, and Thr-376. Asp-375 lines the Mg(2+) pocket.

It belongs to the phosphoglycerate kinase family. In terms of assembly, monomer. Requires Mg(2+) as cofactor. Testis and sperm. Localized on the principle piece in the sperm (at protein level). Testis-specific.

It localises to the cytoplasm. The catalysed reaction is (2R)-3-phosphoglycerate + ATP = (2R)-3-phospho-glyceroyl phosphate + ADP. Its pathway is carbohydrate degradation; glycolysis; pyruvate from D-glyceraldehyde 3-phosphate: step 2/5. Its function is as follows. Essential for sperm motility and male fertility but is not required for the completion of spermatogenesis. This Mus musculus (Mouse) protein is Phosphoglycerate kinase 2 (Pgk2).